The sequence spans 404 residues: MHC class I-like protein MILL1 (404 aa).

Positions Met-1–Ala-30 are cleaved as a signal peptide. The interval Glu-59–Gly-150 is alpha-1. Asn-98, Asn-102, and Asn-165 each carry an N-linked (GlcNAc...) asparagine glycan. Residues Leu-151–Gly-242 form an alpha-2 region. Disulfide bonds link Cys-160–Cys-223 and Cys-262–Cys-322. An Ig-like C1-type domain is found at Pro-224–Val-338. The alpha-3 stretch occupies residues Ser-243–Ser-342. An N-linked (GlcNAc...) asparagine glycan is attached at Asn-323. Residues Gly-343–Thr-373 form a connecting peptide region. Ser-374 carries GPI-anchor amidated serine lipidation. The propeptide at Trp-375–Val-404 is removed in mature form.

This sequence belongs to the MHC class I family. Heterodimer with B2M. Detected in skin, esophagus, tongue, skin, muscle, uterus, ovary, testis and epididymis.

Its subcellular location is the cell membrane. This chain is MHC class I-like protein MILL1, found in Rattus norvegicus (Rat).